We begin with the raw amino-acid sequence, 490 residues long: Katanin p60 ATPase-containing subunit A-like 1 (490 aa).

Methionine 1 is modified (N-acetylmethionine). The tract at residues 96-182 (PAVWPPPVPA…ASDGEIPKFD (87 aa)) is disordered. Residues 116 to 127 (PNREVRPLRKEM) show a composition bias toward basic and acidic residues. Over residues 128–139 (AGVGARGPVGRA) the composition is skewed to low complexity. The segment covering 143–169 (SKSEKPSASRDKDCRARGRDDKGRKNM) has biased composition (basic and acidic residues). Serine 174 carries the post-translational modification Phosphoserine. 248–255 (GPPGTGKT) lines the ATP pocket.

Belongs to the AAA ATPase family. Katanin p60 subunit A1 subfamily. A-like 1 sub-subfamily. Interacts with KATNB1 and KATNBL1.

The protein resides in the cytoplasm. Its subcellular location is the cytoskeleton. It localises to the spindle pole. It is found in the spindle. The enzyme catalyses n ATP + n H2O + a microtubule = n ADP + n phosphate + (n+1) alpha/beta tubulin heterodimers.. In terms of biological role, regulates microtubule dynamics in Sertoli cells, a process that is essential for spermiogenesis and male fertility. Severs microtubules in an ATP-dependent manner, promoting rapid reorganization of cellular microtubule arrays. Has microtubule-severing activity in vitro. The sequence is that of Katanin p60 ATPase-containing subunit A-like 1 from Oryctolagus cuniculus (Rabbit).